A 131-amino-acid polypeptide reads, in one-letter code: Large ribosomal subunit protein bL12 (131 aa).

This sequence belongs to the bacterial ribosomal protein bL12 family. In terms of assembly, homodimer. Part of the ribosomal stalk of the 50S ribosomal subunit. Forms a multimeric L10(L12)X complex, where L10 forms an elongated spine to which 2 to 4 L12 dimers bind in a sequential fashion. Binds GTP-bound translation factors.

Functionally, forms part of the ribosomal stalk which helps the ribosome interact with GTP-bound translation factors. Is thus essential for accurate translation. The sequence is that of Large ribosomal subunit protein bL12 from Prochlorococcus marinus subsp. pastoris (strain CCMP1986 / NIES-2087 / MED4).